The following is a 410-amino-acid chain: MLMPLCGLLWWWWCCCSGWYCYGLCAPAPQMLRHQGLLKCRCRMLFNDLKVFLLRRPPQAPLPMHGDPQPPGLAANNTLPALGAGGWAGWRGPREVVGREPPPVPPPPPLPPSSVEDDWGGPATEPPASLLSSASSDDFCKEKTEDRYSLGSSLDSGMRTPLCRICFQGPEQGELLSPCRCDGSVKCTHQPCLIKWISERGCWSCELCYYKYHVIAISTKNPLQWQAISLTVIEKVQVAAAILGSLFLIASISWLIWSTFSPSARWQRQDLLFQICYGMYGFMDVVCIGLIIHEGPSVYRIFKRWQAVNQQWKVLNYDKTKDLEDQKAGGRTNPRTSSSTQANIPSSEEETAGTPAPEQGPAQAAGHPSGPLSHHHCAYTILHILSHLRPHEQRSPPGSSRELVMRVTTV.

A signal peptide spans 1–18 (MLMPLCGLLWWWWCCCSG). The tract at residues 92 to 136 (GPREVVGREPPPVPPPPPLPPSSVEDDWGGPATEPPASLLSSASS) is disordered. The span at 100-112 (EPPPVPPPPPLPP) shows a compositional bias: pro residues. Residues 126–136 (PPASLLSSASS) show a composition bias toward low complexity. The RING-CH-type zinc-finger motif lies at 155-215 (DSGMRTPLCR…ELCYYKYHVI (61 aa)). Cys-163, Cys-166, Cys-179, Cys-181, His-189, Cys-192, Cys-205, and Cys-208 together coordinate Zn(2+). 2 helical membrane passes run 238–258 (VAAA…LIWS) and 272–292 (LFQI…GLII). Disordered stretches follow at residues 324–372 (EDQK…SGPL) and 390–410 (PHEQ…VTTV). Polar residues predominate over residues 333-346 (NPRTSSSTQANIPS). Low complexity predominate over residues 352–366 (AGTPAPEQGPAQAAG).

In terms of tissue distribution, expressed in brain and placenta.

The protein localises to the golgi apparatus membrane. The catalysed reaction is S-ubiquitinyl-[E2 ubiquitin-conjugating enzyme]-L-cysteine + [acceptor protein]-L-lysine = [E2 ubiquitin-conjugating enzyme]-L-cysteine + N(6)-ubiquitinyl-[acceptor protein]-L-lysine.. Its pathway is protein modification; protein ubiquitination. Functionally, E3 ubiquitin-protein ligase that may mediate ubiquitination of MHC-I and CD4, and promote their subsequent endocytosis and sorting to lysosomes via multivesicular bodies. E3 ubiquitin ligases accept ubiquitin from an E2 ubiquitin-conjugating enzyme in the form of a thioester and then directly transfer the ubiquitin to targeted substrates. The protein is E3 ubiquitin-protein ligase MARCHF4 of Homo sapiens (Human).